Reading from the N-terminus, the 409-residue chain is Peptidase T (409 aa).

Zn(2+) is bound at residue histidine 80. Aspartate 82 is a catalytic residue. Aspartate 143 contacts Zn(2+). Residue glutamate 177 is the Proton acceptor of the active site. Zn(2+)-binding residues include glutamate 178, aspartate 200, and histidine 382.

Belongs to the peptidase M20B family. Zn(2+) is required as a cofactor.

Its subcellular location is the cytoplasm. The enzyme catalyses Release of the N-terminal residue from a tripeptide.. Its function is as follows. Cleaves the N-terminal amino acid of tripeptides. This is Peptidase T from Alkaliphilus oremlandii (strain OhILAs) (Clostridium oremlandii (strain OhILAs)).